Consider the following 282-residue polypeptide: Sulfur carrier protein FdhD (282 aa).

The active-site Cysteine persulfide intermediate is Cys115.

This sequence belongs to the FdhD family.

It localises to the cytoplasm. Required for formate dehydrogenase (FDH) activity. Acts as a sulfur carrier protein that transfers sulfur from IscS to the molybdenum cofactor prior to its insertion into FDH. The chain is Sulfur carrier protein FdhD from Streptomyces coelicolor (strain ATCC BAA-471 / A3(2) / M145).